The chain runs to 340 residues: ATP-dependent 6-phosphofructokinase (340 aa).

Gly11 contacts ATP. 21-25 (RAVVR) serves as a coordination point for ADP. ATP is bound by residues 72–73 (RY) and 102–105 (GDGS). Mg(2+) is bound at residue Asp103. Residue 125-127 (TID) participates in substrate binding. Residue Asp127 is the Proton acceptor of the active site. Arg154 contacts ADP. Residues Arg162 and 169–171 (MGR) each bind substrate. ADP is bound by residues 185–187 (GAD) and 213–215 (KHH). Substrate is bound by residues Glu222, Arg244, and 250–253 (HLLR).

This sequence belongs to the phosphofructokinase type A (PFKA) family. ATP-dependent PFK group I subfamily. Prokaryotic clade 'B1' sub-subfamily. As to quaternary structure, homotetramer. Mg(2+) serves as cofactor.

Its subcellular location is the cytoplasm. The catalysed reaction is beta-D-fructose 6-phosphate + ATP = beta-D-fructose 1,6-bisphosphate + ADP + H(+). Its pathway is carbohydrate degradation; glycolysis; D-glyceraldehyde 3-phosphate and glycerone phosphate from D-glucose: step 3/4. Its activity is regulated as follows. Allosterically activated by ADP and other diphosphonucleosides, and allosterically inhibited by phosphoenolpyruvate. Its function is as follows. Catalyzes the phosphorylation of D-fructose 6-phosphate to fructose 1,6-bisphosphate by ATP, the first committing step of glycolysis. The polypeptide is ATP-dependent 6-phosphofructokinase (Streptococcus agalactiae serotype Ia (strain ATCC 27591 / A909 / CDC SS700)).